Consider the following 427-residue polypeptide: Glutamate-1-semialdehyde 2,1-aminomutase (427 aa).

An N6-(pyridoxal phosphate)lysine modification is found at K265.

Belongs to the class-III pyridoxal-phosphate-dependent aminotransferase family. HemL subfamily. As to quaternary structure, homodimer. It depends on pyridoxal 5'-phosphate as a cofactor.

The protein resides in the cytoplasm. The enzyme catalyses (S)-4-amino-5-oxopentanoate = 5-aminolevulinate. It participates in porphyrin-containing compound metabolism; protoporphyrin-IX biosynthesis; 5-aminolevulinate from L-glutamyl-tRNA(Glu): step 2/2. In Burkholderia pseudomallei (strain 1710b), this protein is Glutamate-1-semialdehyde 2,1-aminomutase.